The chain runs to 292 residues: Ribosomal RNA small subunit methyltransferase A (292 aa).

Residues N46, L48, G73, E94, D118, and N136 each coordinate S-adenosyl-L-methionine.

The protein belongs to the class I-like SAM-binding methyltransferase superfamily. rRNA adenine N(6)-methyltransferase family. RsmA subfamily.

The protein localises to the cytoplasm. The enzyme catalyses adenosine(1518)/adenosine(1519) in 16S rRNA + 4 S-adenosyl-L-methionine = N(6)-dimethyladenosine(1518)/N(6)-dimethyladenosine(1519) in 16S rRNA + 4 S-adenosyl-L-homocysteine + 4 H(+). Functionally, specifically dimethylates two adjacent adenosines (A1518 and A1519) in the loop of a conserved hairpin near the 3'-end of 16S rRNA in the 30S particle. May play a critical role in biogenesis of 30S subunits. This is Ribosomal RNA small subunit methyltransferase A from Deinococcus radiodurans (strain ATCC 13939 / DSM 20539 / JCM 16871 / CCUG 27074 / LMG 4051 / NBRC 15346 / NCIMB 9279 / VKM B-1422 / R1).